A 245-amino-acid chain; its full sequence is NAD(P)H-hydrate epimerase (245 aa).

Positions 16 to 224 (AAALDAELMA…HIADKYDLEV (209 aa)) constitute a YjeF N-terminal domain. Residue 68 to 72 (NNGGD) participates in (6S)-NADPHX binding. K(+) is bound by residues asparagine 69 and aspartate 131. Residues 135 to 141 (GFSFKPP) and aspartate 164 each bind (6S)-NADPHX. Residue serine 167 coordinates K(+).

The protein belongs to the NnrE/AIBP family. Requires K(+) as cofactor.

It is found in the cytoplasm. Its subcellular location is the mitochondrion. It catalyses the reaction (6R)-NADHX = (6S)-NADHX. The enzyme catalyses (6R)-NADPHX = (6S)-NADPHX. In terms of biological role, catalyzes the epimerization of the S- and R-forms of NAD(P)HX, a damaged form of NAD(P)H that is a result of enzymatic or heat-dependent hydration. This is a prerequisite for the S-specific NAD(P)H-hydrate dehydratase to allow the repair of both epimers of NAD(P)HX. This chain is NAD(P)H-hydrate epimerase, found in Yarrowia lipolytica (strain CLIB 122 / E 150) (Yeast).